Consider the following 204-residue polypeptide: Ribosomal RNA large subunit methyltransferase E (204 aa).

S-adenosyl-L-methionine-binding residues include Gly-49, Trp-51, Asp-69, Asn-87, and Asp-111. The Proton acceptor role is filled by Lys-151.

It belongs to the class I-like SAM-binding methyltransferase superfamily. RNA methyltransferase RlmE family.

It is found in the cytoplasm. The catalysed reaction is uridine(2552) in 23S rRNA + S-adenosyl-L-methionine = 2'-O-methyluridine(2552) in 23S rRNA + S-adenosyl-L-homocysteine + H(+). Its function is as follows. Specifically methylates the uridine in position 2552 of 23S rRNA at the 2'-O position of the ribose in the fully assembled 50S ribosomal subunit. The chain is Ribosomal RNA large subunit methyltransferase E from Nitratidesulfovibrio vulgaris (strain ATCC 29579 / DSM 644 / CCUG 34227 / NCIMB 8303 / VKM B-1760 / Hildenborough) (Desulfovibrio vulgaris).